Consider the following 669-residue polypeptide: Alpha-1,6-mannosylglycoprotein 6-beta-N-acetylglucosaminyltransferase (669 aa).

At 1-7 (MRRRHRC) the chain is on the cytoplasmic side. The helical; Signal-anchor for type II membrane protein transmembrane segment at 8 to 28 (VALLFIFSAFITPLGFFYYTI) threads the bilayer. At 29–669 (SNESKRYSEE…EQHAICKKCL (641 aa)) the chain is on the lumenal side. Residues asparagine 30, asparagine 412, asparagine 437, and asparagine 626 are each glycosylated (N-linked (GlcNAc...) asparagine).

Belongs to the glycosyltransferase 18 family. Expressed in a complex subset of neurons in larvae and in the spermathecal and pharyngeal-intestinal valves and certain vulval cells of adults.

The protein localises to the golgi apparatus membrane. It carries out the reaction N(4)-{beta-D-GlcNAc-(1-&gt;2)-[beta-D-GlcNAc-(1-&gt;4)]-alpha-D-Man-(1-&gt;3)-[beta-D-GlcNAc-(1-&gt;2)-alpha-D-Man-(1-&gt;6)]-beta-D-Man-(1-&gt;4)-beta-D-GlcNAc-(1-&gt;4)-beta-D-GlcNAc}-L-asparaginyl-[protein] + UDP-N-acetyl-alpha-D-glucosamine = N(4)-{beta-D-GlcNAc-(1-&gt;2)-[beta-D-GlcNAc-(1-&gt;4)]-alpha-D-Man-(1-&gt;3)-[beta-D-GlcNAc-(1-&gt;2)-[beta-D-GlcNAc-(1-&gt;6)]-alpha-D-Man-(1-&gt;6)]-beta-D-Man-(1-&gt;4)-beta-D-GlcNAc-(1-&gt;4)-beta-D-GlcNAc}-L-asparaginyl-[protein] + UDP + H(+). Its pathway is protein modification; protein glycosylation. Its function is as follows. Catalyzes the addition of N-acetylglucosamine (GlcNAc) in beta 1-6 linkage to the alpha-linked mannose of biantennary N-linked oligosaccharides. This is Alpha-1,6-mannosylglycoprotein 6-beta-N-acetylglucosaminyltransferase (gly-2) from Caenorhabditis elegans.